The sequence spans 208 residues: MLSSQLSAYLAEMNLSATEQQQGQLVGFVEMLNKWNKAYNLTSVRSPEQMLIRHVMDSLTVSPYLSGKRFIDVGTGPGLPGIPLAIMNPDKEFVLLDSLGKRIRFQKQVQFELKINNISSVESRVEAFQPEIKFDGVLSRAFASVQDMLTWCHHLPHNEGIFYALKGQLNQVELEAIPEGFELLETIVLQVPQLDEQRHLLKLRKKLG.

S-adenosyl-L-methionine contacts are provided by residues glycine 74, leucine 79, 125–126 (VE), and arginine 140.

This sequence belongs to the methyltransferase superfamily. RNA methyltransferase RsmG family.

The protein localises to the cytoplasm. The catalysed reaction is guanosine(527) in 16S rRNA + S-adenosyl-L-methionine = N(7)-methylguanosine(527) in 16S rRNA + S-adenosyl-L-homocysteine. Functionally, specifically methylates the N7 position of guanine in position 527 of 16S rRNA. This is Ribosomal RNA small subunit methyltransferase G from Shewanella denitrificans (strain OS217 / ATCC BAA-1090 / DSM 15013).